We begin with the raw amino-acid sequence, 492 residues long: Solute carrier family 2, facilitated glucose transporter member 1 (492 aa).

An N-acetylmethionine modification is found at methionine 1. Residues 1–11 (MDPSSKKVTGR) lie on the Cytoplasmic side of the membrane. The chain crosses the membrane as a helical span at residues 12-33 (LMLAVGGAVLGSLQFGYNTGVI). At 34-66 (NAPQKVIEEFYNQTWNHRYGEPIPSTTLTTLWS) the chain is on the extracellular side. N-linked (GlcNAc...) asparagine glycosylation occurs at asparagine 45. The helical transmembrane segment at 67 to 87 (LSVAIFSVGGMIGSFSVGLFV) threads the bilayer. Over 88-90 (NRF) the chain is Cytoplasmic. The helical transmembrane segment at 91-112 (GRRNSMLMMNLLAFVAAVLMGF) threads the bilayer. Residues 113 to 120 (SKLGKSFE) are Extracellular-facing. A helical membrane pass occupies residues 121 to 144 (MLILGRFIIGVYCGLTTGFVPMYV). At 145–155 (GEVSPTALRGA) the chain is on the cytoplasmic side. A helical transmembrane segment spans residues 156–176 (LGTLHQLGIVVGILIAQVFGL). Glutamine 161 lines the D-glucose pocket. At 177-185 (DSIMGNADL) the chain is on the extracellular side. A helical transmembrane segment spans residues 186-206 (WPLLLSVIFIPALLQCILLPF). Over 207-271 (CPESPRFLLI…LFRSPAYRQP (65 aa)) the chain is Cytoplasmic. Position 226 is a phosphoserine (serine 226). A helical membrane pass occupies residues 272–293 (ILIAVVLQLSQQLSGINAVFYY). Residues 282-283 (QQ) and asparagine 288 each bind D-glucose. Residues 294 to 306 (STSIFEKAGVQQP) are Extracellular-facing. Residues 307 to 328 (VYATIGSGIVNTAFTVVSLFVV) traverse the membrane as a helical segment. Asparagine 317 contributes to the D-glucose binding site. Residues 329 to 334 (ERAGRR) are Cytoplasmic-facing. Residues 335–355 (TLHLIGLAGMAGCAVLMTIAL) form a helical membrane-spanning segment. At 356–365 (ALLERLPWMS) the chain is on the extracellular side. The chain crosses the membrane as a helical span at residues 366–388 (YLSIVAIFGFVAFFEVGPGPIPW). Positions 380 and 388 each coordinate D-glucose. Topologically, residues 389–401 (FIVAELFSQGPRP) are cytoplasmic. The helical transmembrane segment at 402-422 (AAIAVAGFSNWTSNFIVGMCF) threads the bilayer. Residues 423 to 429 (QYVEQLC) are Extracellular-facing. Residues 430–450 (GPYVFIIFTVLLVLFFIFTYF) form a helical membrane-spanning segment. Topologically, residues 451-492 (KVPETKGRTFDEIASGFRQGGASQSDKTPEELFHPLGADSQV) are cytoplasmic. Phosphoserine is present on serine 465. Positions 468–492 (RQGGASQSDKTPEELFHPLGADSQV) are disordered. Threonine 478 is modified (phosphothreonine). A Phosphoserine modification is found at serine 490.

This sequence belongs to the major facilitator superfamily. Sugar transporter (TC 2.A.1.1) family. Glucose transporter subfamily. Found in a complex with ADD2, DMTN and SLC2A1. Interacts (via C-terminus cytoplasmic region) with DMTN isoform 2. Interacts with SNX27; the interaction is required when endocytosed to prevent degradation in lysosomes and promote recycling to the plasma membrane. Interacts with GIPC (via PDZ domain). Interacts with STOM. Interacts with SGTA (via Gln-rich region). Interacts with isoform 1 of BSG. Interacts with SMIM43; the interaction may promote SLC2A1-mediated glucose transport to meet the energy needs of mesendoderm differentiation. Post-translationally, phosphorylation at Ser-226 by PKC promotes glucose uptake by increasing cell membrane localization. As to expression, retina (at protein level).

It is found in the cell membrane. It localises to the photoreceptor inner segment. The catalysed reaction is D-glucose(out) = D-glucose(in). The uptake of glucose is inhibited by cytochalasin B. Glucose uptake is increased in response to phorbol ester 12-O-tetradecanoylphorbol-13-acetate (TPA) treatment: TPA-induced glucose uptake requires phosphorylation at Ser-226. In terms of biological role, facilitative glucose transporter, which is responsible for constitutive or basal glucose uptake. Has a very broad substrate specificity; can transport a wide range of aldoses including both pentoses and hexoses. Most important energy carrier of the brain: present at the blood-brain barrier and assures the energy-independent, facilitative transport of glucose into the brain. In association with BSG and NXNL1, promotes retinal cone survival by increasing glucose uptake into photoreceptors. Required for mesendoderm differentiation. The polypeptide is Solute carrier family 2, facilitated glucose transporter member 1 (Mus musculus (Mouse)).